The following is a 594-amino-acid chain: uncharacterized protein (594 aa).

Functionally, the presence of the two linear plasmids, termed pGKL1 and pGKL2, in strains of Kluyveromyces lactis confers the killer phenotype to the host cell, by promoting the secretion of a toxin able to inhibit the growth of sensitive strains. This is an uncharacterized protein from Kluyveromyces lactis (strain ATCC 8585 / CBS 2359 / DSM 70799 / NBRC 1267 / NRRL Y-1140 / WM37) (Yeast).